The chain runs to 269 residues: Eukaryotic translation initiation factor 3 subunit G-1 (269 aa).

The region spanning 188–266 (AAIRISNLSE…LILSVEWSKP (79 aa)) is the RRM domain.

This sequence belongs to the eIF-3 subunit G family. Component of the eukaryotic translation initiation factor 3 (eIF-3) complex. The eIF-3 complex interacts with pix.

It localises to the cytoplasm. RNA-binding component of the eukaryotic translation initiation factor 3 (eIF-3) complex, which is involved in protein synthesis of a specialized repertoire of mRNAs and, together with other initiation factors, stimulates binding of mRNA and methionyl-tRNAi to the 40S ribosome. The eIF-3 complex specifically targets and initiates translation of a subset of mRNAs involved in cell proliferation. This subunit can bind 18S rRNA. In Drosophila virilis (Fruit fly), this protein is Eukaryotic translation initiation factor 3 subunit G-1.